Reading from the N-terminus, the 504-residue chain is Bifunctional purine biosynthesis protein PurH (504 aa).

Residues Met-1–Ser-144 enclose the MGS-like domain.

It belongs to the PurH family.

The enzyme catalyses (6R)-10-formyltetrahydrofolate + 5-amino-1-(5-phospho-beta-D-ribosyl)imidazole-4-carboxamide = 5-formamido-1-(5-phospho-D-ribosyl)imidazole-4-carboxamide + (6S)-5,6,7,8-tetrahydrofolate. It carries out the reaction IMP + H2O = 5-formamido-1-(5-phospho-D-ribosyl)imidazole-4-carboxamide. It participates in purine metabolism; IMP biosynthesis via de novo pathway; 5-formamido-1-(5-phospho-D-ribosyl)imidazole-4-carboxamide from 5-amino-1-(5-phospho-D-ribosyl)imidazole-4-carboxamide (10-formyl THF route): step 1/1. The protein operates within purine metabolism; IMP biosynthesis via de novo pathway; IMP from 5-formamido-1-(5-phospho-D-ribosyl)imidazole-4-carboxamide: step 1/1. This chain is Bifunctional purine biosynthesis protein PurH, found in Fusobacterium nucleatum subsp. nucleatum (strain ATCC 25586 / DSM 15643 / BCRC 10681 / CIP 101130 / JCM 8532 / KCTC 2640 / LMG 13131 / VPI 4355).